The chain runs to 293 residues: Homoserine kinase (293 aa).

An ATP-binding site is contributed by 84 to 94 (PFSRGLGSSSS).

This sequence belongs to the GHMP kinase family. Homoserine kinase subfamily.

It localises to the cytoplasm. It carries out the reaction L-homoserine + ATP = O-phospho-L-homoserine + ADP + H(+). It functions in the pathway amino-acid biosynthesis; L-threonine biosynthesis; L-threonine from L-aspartate: step 4/5. In terms of biological role, catalyzes the ATP-dependent phosphorylation of L-homoserine to L-homoserine phosphate. The protein is Homoserine kinase of Campylobacter fetus subsp. fetus (strain 82-40).